A 188-amino-acid polypeptide reads, in one-letter code: GMP synthase [glutamine-hydrolyzing] subunit A (188 aa).

In terms of domain architecture, Glutamine amidotransferase type-1 spans 1-188; that stretch reads MIVILNNGGQ…FCKVCGLLGE (188 aa). Catalysis depends on C76, which acts as the Nucleophile. Catalysis depends on residues H163 and E165.

As to quaternary structure, heterodimer composed of a glutamine amidotransferase subunit (A) and a GMP-binding subunit (B).

The catalysed reaction is XMP + L-glutamine + ATP + H2O = GMP + L-glutamate + AMP + diphosphate + 2 H(+). It functions in the pathway purine metabolism; GMP biosynthesis; GMP from XMP (L-Gln route): step 1/1. Its function is as follows. Catalyzes the synthesis of GMP from XMP. This chain is GMP synthase [glutamine-hydrolyzing] subunit A, found in Methanococcus aeolicus (strain ATCC BAA-1280 / DSM 17508 / OCM 812 / Nankai-3).